Here is an 87-residue protein sequence, read N- to C-terminus: Omega-lycotoxin-Am1d (87 aa).

The signal sequence occupies residues Met1–Cys17. Positions Gln18–Arg40 are excised as a propeptide. 4 cysteine pairs are disulfide-bonded: Cys44–Cys59, Cys51–Cys64, Cys58–Cys84, and Cys66–Cys82.

Belongs to the neurotoxin omega-lctx family. In terms of tissue distribution, expressed by the venom gland.

Its subcellular location is the secreted. Functionally, modulates Cav2.1/CACNA1A voltage-gated calcium channels (P/Q-type currents) in rat cerebellar Purkinje cells and hippocampal CA1-CA3 neurons. At saturating concentrations (&gt;10 nM) decelerates activation kinetics and slightly increases peak amplitude without affecting deactivation kinetics. In vivo, does not cause death when intravenously injected into mice. In rat models, through its activity on Cav2.1/CACNA1A, has an ameliorative effect on memory defects provoked by hyperstimulation of N-methyl-D-aspartate receptors (NMDARs) in the hippocampus. The polypeptide is Omega-lycotoxin-Am1d (Alopecosa marikovskyi (Wolf spider)).